Here is a 65-residue protein sequence, read N- to C-terminus: MPKLKTRKAAARRFKATGSGKIKRRKAFKSHLLEHKSSTRKNNLSKTTLVHKTNEENVRLMIPYL.

A disordered region spans residues 1–28 (MPKLKTRKAAARRFKATGSGKIKRRKAF).

It belongs to the bacterial ribosomal protein bL35 family.

This Trichodesmium erythraeum (strain IMS101) protein is Large ribosomal subunit protein bL35.